Reading from the N-terminus, the 305-residue chain is tRNA uridine(34) hydroxylase (305 aa).

In terms of domain architecture, Rhodanese spans 125–219 (ADENTVVVDT…YLEEVPREQS (95 aa)). C179 serves as the catalytic Cysteine persulfide intermediate.

Belongs to the TrhO family.

It catalyses the reaction uridine(34) in tRNA + AH2 + O2 = 5-hydroxyuridine(34) in tRNA + A + H2O. Its function is as follows. Catalyzes oxygen-dependent 5-hydroxyuridine (ho5U) modification at position 34 in tRNAs. The protein is tRNA uridine(34) hydroxylase of Brucella canis (strain ATCC 23365 / NCTC 10854 / RM-666).